The sequence spans 182 residues: CKLF-like MARVEL transmembrane domain-containing protein 3 (182 aa).

Acidic residues predominate over residues 1–12; it reads MWPPDPDPDPDP. Residues 1-21 form a disordered region; the sequence is MWPPDPDPDPDPEPAGGSRPG. The MARVEL domain occupies 36–155; it reads FLCSLKGRLL…DFYLIFNDVA (120 aa). A run of 3 helical transmembrane segments spans residues 64 to 84, 101 to 121, and 131 to 151; these read ASAFLTAPLLEFLLALYFLFA, MDFLRCVTAALIYFAISITAI, and AAGVFGFFATIVFATDFYLIF.

The protein belongs to the chemokine-like factor family. As to expression, expressed in the leukocytes, placenta and testis.

Its subcellular location is the membrane. This chain is CKLF-like MARVEL transmembrane domain-containing protein 3 (CMTM3), found in Homo sapiens (Human).